Here is a 304-residue protein sequence, read N- to C-terminus: ADP-polyphosphate phosphotransferase (304 aa).

This sequence belongs to the polyphosphate kinase 2 (PPK2) family. Class I subfamily.

It catalyses the reaction [phosphate](n) + ATP = [phosphate](n+1) + ADP. Functionally, uses inorganic polyphosphate (polyP) as a donor to convert ADP to ATP. The chain is ADP-polyphosphate phosphotransferase from Pseudomonas aeruginosa (strain ATCC 15692 / DSM 22644 / CIP 104116 / JCM 14847 / LMG 12228 / 1C / PRS 101 / PAO1).